An 807-amino-acid chain; its full sequence is Probable dimethyl sulfoxide reductase chain YnfF (807 aa).

Positions Met1–Ala45 form a signal peptide, tat-type signal. A 4Fe-4S Mo/W bis-MGD-type domain is found at Glu52–Asp113. [4Fe-4S] cluster-binding residues include Cys59, Cys63, Cys67, and Cys99. Mo-bis(molybdopterin guanine dinucleotide) is bound at residue Ser195.

Belongs to the prokaryotic molybdopterin-containing oxidoreductase family. The complex consists of three subunits: YnfF, the reductase; YnfG, an electron transfer protein, and YnfH, a membrane anchor protein. It depends on [4Fe-4S] cluster as a cofactor. Mo-bis(molybdopterin guanine dinucleotide) is required as a cofactor. Exported by the Tat system. The position of the signal peptide cleavage has not been experimentally proven. Can also be exported by the Sec system.

The protein resides in the cell membrane. Terminal reductase during anaerobic growth on various sulfoxide and N-oxide compounds. This Escherichia coli (strain K12) protein is Probable dimethyl sulfoxide reductase chain YnfF (ynfF).